A 485-amino-acid polypeptide reads, in one-letter code: MDALKQLEVSPSILFVTLAVMAGIILFFRSKRHSSVKLPPGNLGFPLVGETLQFVRSLGSSTPQQFIEERMSKFGDVFKTSIIGHPTVVLCGPAGNRLVLSNENKLVQMSWPSSMMKLIGEDCLGGKTGEQHRIVRAALTRFLGPQALQNHFAKMSSGIQRHINEKWKGKDEATVLPLVKDLVFSVASRLFFGITEEHLQEQLHNLLEVILVGSFSVPLNIPGFSYHKAIQARATLADIMTHLIEKRRNELRAGTASENQDLLSVLLTFTDERGNSLADKEILDNFSMLLHGSYDSTNSPLTMLIKVLASHPESYEKVAQEQFGILSTKMEGEEIAWKDLKEMKYSWQVVQETLRMYPPIFGTFRKAITDIHYNGYTIPKGWKLLWTTYSTQTKEEYFKDADQFKPSRFEEEGKHVTPYTYLPFGGGMRVCPGWEFAKMETLLFLHHFVKAFSGLKAIDPNEKLSGKPLPPLPVNGLPIKLYSRS.

Position 431 (Cys-431) interacts with heme.

The protein belongs to the cytochrome P450 family. Heme is required as a cofactor.

It carries out the reaction taxa-4(20),11-dien-5alpha-ol + reduced [NADPH--hemoprotein reductase] + O2 = taxa-4(20),11-dien-5alpha,13alpha-diol + oxidized [NADPH--hemoprotein reductase] + H2O + H(+). Its pathway is alkaloid biosynthesis; taxol biosynthesis. Functionally, involved in the transformation of a taxadienyl acetate by hydroxylation at C13 to yield taxadien-5-alpha-acetoxy-13-alpha-ol. The polypeptide is Taxane 13-alpha-hydroxylase (CYP725A2) (Taxus cuspidata (Japanese yew)).